The sequence spans 226 residues: Phosphatidylserine decarboxylase proenzyme (226 aa).

The Schiff-base intermediate with substrate; via pyruvic acid role is filled by S184. Pyruvic acid (Ser); by autocatalysis is present on S184.

This sequence belongs to the phosphatidylserine decarboxylase family. PSD-A subfamily. Heterodimer of a large membrane-associated beta subunit and a small pyruvoyl-containing alpha subunit. The cofactor is pyruvate. In terms of processing, is synthesized initially as an inactive proenzyme. Formation of the active enzyme involves a self-maturation process in which the active site pyruvoyl group is generated from an internal serine residue via an autocatalytic post-translational modification. Two non-identical subunits are generated from the proenzyme in this reaction, and the pyruvate is formed at the N-terminus of the alpha chain, which is derived from the carboxyl end of the proenzyme. The post-translation cleavage follows an unusual pathway, termed non-hydrolytic serinolysis, in which the side chain hydroxyl group of the serine supplies its oxygen atom to form the C-terminus of the beta chain, while the remainder of the serine residue undergoes an oxidative deamination to produce ammonia and the pyruvoyl prosthetic group on the alpha chain.

Its subcellular location is the cell membrane. It catalyses the reaction a 1,2-diacyl-sn-glycero-3-phospho-L-serine + H(+) = a 1,2-diacyl-sn-glycero-3-phosphoethanolamine + CO2. Its pathway is phospholipid metabolism; phosphatidylethanolamine biosynthesis; phosphatidylethanolamine from CDP-diacylglycerol: step 2/2. In terms of biological role, catalyzes the formation of phosphatidylethanolamine (PtdEtn) from phosphatidylserine (PtdSer). This chain is Phosphatidylserine decarboxylase proenzyme, found in Ehrlichia canis (strain Jake).